The chain runs to 228 residues: L-ribulose-5-phosphate 4-epimerase UlaF (228 aa).

Substrate contacts are provided by residues G26–N27, S43–G44, and S72–S73. Positions 74, 93, and 95 each coordinate Zn(2+). Residue D118 is the Proton donor/acceptor of the active site. A Zn(2+)-binding site is contributed by H167. Residue Y225 is the Proton donor/acceptor of the active site.

This sequence belongs to the aldolase class II family. AraD/FucA subfamily. The cofactor is Zn(2+).

The enzyme catalyses L-ribulose 5-phosphate = D-xylulose 5-phosphate. Its pathway is cofactor degradation; L-ascorbate degradation; D-xylulose 5-phosphate from L-ascorbate: step 4/4. Catalyzes the isomerization of L-ribulose 5-phosphate to D-xylulose 5-phosphate. Is involved in the anaerobic L-ascorbate utilization. This Escherichia coli (strain K12 / MC4100 / BW2952) protein is L-ribulose-5-phosphate 4-epimerase UlaF.